We begin with the raw amino-acid sequence, 466 residues long: Asparagine--tRNA ligase (466 aa).

This sequence belongs to the class-II aminoacyl-tRNA synthetase family. Homodimer.

It localises to the cytoplasm. It catalyses the reaction tRNA(Asn) + L-asparagine + ATP = L-asparaginyl-tRNA(Asn) + AMP + diphosphate + H(+). The protein is Asparagine--tRNA ligase of Shewanella baltica (strain OS185).